Here is a 364-residue protein sequence, read N- to C-terminus: Mannonate dehydratase (364 aa).

It belongs to the mannonate dehydratase family. Fe(2+) is required as a cofactor. Mn(2+) serves as cofactor.

It catalyses the reaction D-mannonate = 2-dehydro-3-deoxy-D-gluconate + H2O. It functions in the pathway carbohydrate metabolism; pentose and glucuronate interconversion. Its function is as follows. Catalyzes the dehydration of D-mannonate. The protein is Mannonate dehydratase of Endomicrobium trichonymphae.